Reading from the N-terminus, the 301-residue chain is Protein URE2 (301 aa).

Residues D59–N143 form the GST N-terminal domain. The GST C-terminal domain occupies N152–D301.

The protein belongs to the GST superfamily. In terms of assembly, homodimer.

Plays an important role in the cellular response to the nitrogen source. URE2 gene plays a major part in the repression of GLN1 and GDH2 genes by glutamine, and is required for the inactivation of glutamine synthetase. URE2 gene product may catalytically inactivate GLN3 in response to an increase in the intracellular concentration of glutamine. This Meyerozyma guilliermondii (strain ATCC 6260 / CBS 566 / DSM 6381 / JCM 1539 / NBRC 10279 / NRRL Y-324) (Yeast) protein is Protein URE2 (URE2).